A 665-amino-acid chain; its full sequence is Secreted LysM effector Lys3 (665 aa).

The first 19 residues, 1-19, serve as a signal peptide directing secretion; that stretch reads MLWLTVSLTGFALLGVVAA. N-linked (GlcNAc...) asparagine glycans are attached at residues asparagine 43 and asparagine 153. LysM domains are found at residues 166–211, 216–264, and 303–349; these read RTYT…TLCL, TLRK…YICI, and KWYV…AYCV. Residue asparagine 234 is glycosylated (N-linked (GlcNAc...) asparagine). Asparagine 398 is a glycosylation site (N-linked (GlcNAc...) asparagine). The 46-residue stretch at 409–454 folds into the LysM 4 domain; that stretch reads SWSDAAKLNSCSFIAHINGVTVSQLLQWNPSLSKDSCSLSRELYYC. The N-linked (GlcNAc...) asparagine glycan is linked to asparagine 531. A disordered region spans residues 585–610; it reads SSVSMTNSAPATATSTGGPPAPTQDG. Over residues 592–602 the composition is skewed to low complexity; that stretch reads SAPATATSTGG. N-linked (GlcNAc...) asparagine glycosylation occurs at asparagine 614. The region spanning 617–663 is the LysM 5 domain; it reads KWHVVESGDGCWAIYTKYGITSDQLFEWNTKISKDCSNIWLGYAVCV.

This sequence belongs to the secreted LysM effector family.

Functionally, might have a role in sequestration of chitin oligosaccharides (breakdown products of fungal cell walls that are released during invasion and act as triggers of host immunity) to dampen host defense. The polypeptide is Secreted LysM effector Lys3 (Pochonia chlamydosporia (strain 123) (Metacordyceps chlamydosporia)).